Here is a 158-residue protein sequence, read N- to C-terminus: Adenosine 5'-monophosphoramidase HNT1 (158 aa).

The HIT domain occupies 26 to 129 (IFCKIIKSEI…IPKRDEKSGL (104 aa)). Residues 51–52 (DI), N103, 109–111 (HQE), and 116–118 (HFH) each bind AMP. Positions 114-118 (HVHFH) match the Histidine triad motif motif. H116 (tele-AMP-histidine intermediate) is an active-site residue.

Belongs to the HINT family. As to quaternary structure, homodimer. Interacts with KIN28. Mg(2+) serves as cofactor.

It catalyses the reaction adenosine 5'-phosphoramidate + H2O = AMP + NH4(+). Functionally, hydrolyzes adenosine 5'-monophosphoramidate substrates such as AMP-morpholidate, AMP-N-alanine methyl ester, AMP-alpha-acetyl lysine methyl ester and AMP-NH2. Plays a role in the regulation of kinase KIN28 function. Essential for growth on galactose media at elevated temperatures. In Saccharomyces cerevisiae (strain ATCC 204508 / S288c) (Baker's yeast), this protein is Adenosine 5'-monophosphoramidase HNT1.